The primary structure comprises 417 residues: Gamma-glutamyl phosphate reductase (417 aa).

Belongs to the gamma-glutamyl phosphate reductase family.

It is found in the cytoplasm. It catalyses the reaction L-glutamate 5-semialdehyde + phosphate + NADP(+) = L-glutamyl 5-phosphate + NADPH + H(+). It participates in amino-acid biosynthesis; L-proline biosynthesis; L-glutamate 5-semialdehyde from L-glutamate: step 2/2. In terms of biological role, catalyzes the NADPH-dependent reduction of L-glutamate 5-phosphate into L-glutamate 5-semialdehyde and phosphate. The product spontaneously undergoes cyclization to form 1-pyrroline-5-carboxylate. The chain is Gamma-glutamyl phosphate reductase from Escherichia coli O8 (strain IAI1).